We begin with the raw amino-acid sequence, 308 residues long: Low density lipoprotein receptor adapter protein 1 (308 aa).

Met1 is subject to N-acetylmethionine. Ser14 is modified (phosphoserine). Residues 41 to 195 form the PID domain; that stretch reads LLEGMVFSLK…QEGGDVPGTR (155 aa). A disordered region spans residues 179–201; it reads EKREKANQEGGDVPGTRRDSTPS. Residues Ser198 and Ser201 each carry the phosphoserine modification. A Clathrin box motif is present at residues 211 to 215; that stretch reads LLDLE. Residues 248-275 are AP-2 complex binding; that stretch reads WELDDGLDEAFSRLAQSRTNPQVLDTGL. A [DE]-X(1,2)-F-X-X-[FL]-X-X-X-R motif motif is present at residues 256–265; the sequence is EAFSRLAQSR. Positions 288 to 308 are disordered; the sequence is PTDWDKPDSSGIDQDDDVFTF.

Interacts (via PID domain) with LDLR (via NPXY motif). Binds to soluble clathrin trimers. Interacts with AP2B1; the interaction mediates the association with the AP-2 complex. Interacts with VLDLR. Interacts with LRP2.

The protein localises to the cytoplasm. Functionally, adapter protein (clathrin-associated sorting protein (CLASP)) required for efficient endocytosis of the LDL receptor (LDLR) in polarized cells such as hepatocytes and lymphocytes, but not in non-polarized cells (fibroblasts). May be required for LDL binding and internalization but not for receptor clustering in coated pits. May facilitate the endocytosis of LDLR and LDLR-LDL complexes from coated pits by stabilizing the interaction between the receptor and the structural components of the pits. May also be involved in the internalization of other LDLR family members. Binds to phosphoinositides, which regulate clathrin bud assembly at the cell surface. Required for trafficking of LRP2 to the endocytic recycling compartment which is necessary for LRP2 proteolysis, releasing a tail fragment which translocates to the nucleus and mediates transcriptional repression. In Mus musculus (Mouse), this protein is Low density lipoprotein receptor adapter protein 1.